The following is a 216-amino-acid chain: Uracil phosphoribosyltransferase (216 aa).

Residues arginine 85, arginine 110, and 135–143 (DPMVATGYS) each bind 5-phospho-alpha-D-ribose 1-diphosphate. Uracil-binding positions include isoleucine 200 and 205–207 (GDA). A 5-phospho-alpha-D-ribose 1-diphosphate-binding site is contributed by aspartate 206.

This sequence belongs to the UPRTase family. Requires Mg(2+) as cofactor.

It catalyses the reaction UMP + diphosphate = 5-phospho-alpha-D-ribose 1-diphosphate + uracil. It participates in pyrimidine metabolism; UMP biosynthesis via salvage pathway; UMP from uracil: step 1/1. Its activity is regulated as follows. Allosterically activated by GTP. Catalyzes the conversion of uracil and 5-phospho-alpha-D-ribose 1-diphosphate (PRPP) to UMP and diphosphate. The sequence is that of Uracil phosphoribosyltransferase from Burkholderia lata (strain ATCC 17760 / DSM 23089 / LMG 22485 / NCIMB 9086 / R18194 / 383).